Reading from the N-terminus, the 504-residue chain is L-carnitine/gamma-butyrobetaine antiporter (504 aa).

12 consecutive transmembrane segments (helical) span residues 8 to 28 (AGIE…LCWL), 51 to 71 (WGWA…WLVF), 92 to 112 (IFMM…SIEI), 143 to 163 (GPLP…FFFV), 195 to 215 (FYLV…TPLV), 231 to 251 (LDAI…AFGL), 263 to 283 (TYLS…SFIV), 315 to 335 (AWTV…SIFL), 347 to 367 (LCLG…TYSG), 403 to 423 (LSTA…VTLI), 446 to 466 (LLVR…LLAL), and 475 to 495 (AIIA…LSFI).

Belongs to the BCCT transporter (TC 2.A.15) family. CaiT subfamily. Homotrimer.

The protein resides in the cell inner membrane. It carries out the reaction 4-(trimethylamino)butanoate(in) + (R)-carnitine(out) = 4-(trimethylamino)butanoate(out) + (R)-carnitine(in). The protein operates within amine and polyamine metabolism; carnitine metabolism. Catalyzes the exchange of L-carnitine for gamma-butyrobetaine. The chain is L-carnitine/gamma-butyrobetaine antiporter from Proteus sp. (strain LE138).